Consider the following 461-residue polypeptide: Cysteine--tRNA ligase (461 aa).

Residue C31 coordinates Zn(2+). Residues 33 to 43 (PTVYDFAHIGN) carry the 'HIGH' region motif. 3 residues coordinate Zn(2+): C219, H244, and E248. Positions 277-281 (KMSKS) match the 'KMSKS' region motif. K280 serves as a coordination point for ATP. Residues 436 to 452 (SEKGIQLKDGKDKETGE) show a composition bias toward basic and acidic residues. The disordered stretch occupies residues 436-461 (SEKGIQLKDGKDKETGERTTTWELKR).

Belongs to the class-I aminoacyl-tRNA synthetase family. In terms of assembly, monomer. Requires Zn(2+) as cofactor.

Its subcellular location is the cytoplasm. It catalyses the reaction tRNA(Cys) + L-cysteine + ATP = L-cysteinyl-tRNA(Cys) + AMP + diphosphate. In Agrobacterium fabrum (strain C58 / ATCC 33970) (Agrobacterium tumefaciens (strain C58)), this protein is Cysteine--tRNA ligase.